The sequence spans 1115 residues: Calcium-transporting ATPase PAT1 (1115 aa).

At 1–99 (MTGSHEMESI…SIVLDALSDH (99 aa)) the chain is on the stromal side. The helical transmembrane segment at 100–120 (ILILLIVAAVVSIVLGSIDYT) threads the bilayer. The Lumenal portion of the chain corresponds to 121–126 (SDHPET). The chain crosses the membrane as a helical span at residues 127–147 (GWIDGVAILVAVILVVGITSL). The Stromal portion of the chain corresponds to 148–235 (NDFKNQARFR…KGQPQDNMDP (88 aa)). A helical membrane pass occupies residues 236–256 (FLISGSMVIEGFGTMLVTAVG). At 257–287 (VNSFNGKTMMGLRVASEDTPLQMKLSVLASR) the chain is on the lumenal side. The helical transmembrane segment at 288-308 (IGYFGMGAAILMLLIAIPKYF) threads the bilayer. At 309–328 (IQRKVHDIEITREDAQPIVQ) the chain is on the stromal side. A helical membrane pass occupies residues 329–349 (LVISAITIVVVAVPEGLPLAV). The Lumenal portion of the chain corresponds to 350-735 (TMALAYGMMK…GRNIYDAICK (386 aa)). Asp-385 serves as the catalytic 4-aspartylphosphate intermediate. Asp-678 and Asp-682 together coordinate Mg(2+). The chain crosses the membrane as a helical span at residues 736–756 (FLQFQLTVNVVAVTVAFIGTL). The Stromal segment spans residues 757–832 (TSDVVEDKDN…GKNAPLITRS (76 aa)). Residues 762–784 (EDKDNSSSSGSADKVTEEEPRQG) form a disordered region. The chain crosses the membrane as a helical span at residues 833–853 (MWKNIIGQAALQLAILFTILY). Topologically, residues 854 to 873 (QGHNIFQHFVPQAHGPIIKN) are lumenal. The chain crosses the membrane as a helical span at residues 874-894 (GLHHYTLVFNCFVFLQLFNEI). At 895–913 (NARVLGSRTNPFKNFFNNP) the chain is on the stromal side. The helical transmembrane segment at 914–934 (IFIAVMIFTLGVQIIFVTFGG) threads the bilayer. The Lumenal portion of the chain corresponds to 935-943 (SATSTDSLY). A helical transmembrane segment spans residues 944 to 964 (IVEWICCVVVGAISLPVGLLL). At 965 to 1115 (RKIPIREPVV…LHLPVNQINN (151 aa)) the chain is on the stromal side. Positions 984 to 1056 (AVYTSPSPNP…IPSSSSNLVN (73 aa)) are disordered. Low complexity predominate over residues 1040–1053 (NDNINTPIPSSSSN).

This sequence belongs to the cation transport ATPase (P-type) (TC 3.A.3) family. Type IIB subfamily.

Its subcellular location is the contractile vacuole membrane. It localises to the cell membrane. It carries out the reaction Ca(2+)(in) + ATP + H2O = Ca(2+)(out) + ADP + phosphate + H(+). Functionally, calcium ATPase involved in Ca(2+) homeostasis as a component of the contractile vacuole complex. The chain is Calcium-transporting ATPase PAT1 (patA) from Dictyostelium discoideum (Social amoeba).